The chain runs to 84 residues: RNA-binding protein Hfq (84 aa).

The region spanning 10–69 (EPFLNTLRREHVPVSIYLVNGIKLQGQIESFDQYVVLLRNTVTQMVFKHAISTIVPGRAV) is the Sm domain.

This sequence belongs to the Hfq family. In terms of assembly, homohexamer.

In terms of biological role, RNA chaperone that binds small regulatory RNA (sRNAs) and mRNAs to facilitate mRNA translational regulation in response to envelope stress, environmental stress and changes in metabolite concentrations. Also binds with high specificity to tRNAs. The protein is RNA-binding protein Hfq of Verminephrobacter eiseniae (strain EF01-2).